Here is a 147-residue protein sequence, read N- to C-terminus: uncharacterized protein (147 aa).

Over 1–16 (MDHRAAFGYFSNACFK) the chain is Extracellular. Residues 17–37 (VMLFSSLLASFASSVAFISLI) traverse the membrane as a helical segment. Over 38–105 (TFSLSSSESP…FEAAFFLLTN (68 aa)) the chain is Cytoplasmic. The chain crosses the membrane as a helical span at residues 106-126 (EMIFFILYYFFSCLMFFYVAS). Residues 127–147 (ERNTNPKILQTINTKPLYIKN) are Extracellular-facing.

The protein resides in the membrane. This is an uncharacterized protein from Saccharomyces cerevisiae (strain ATCC 204508 / S288c) (Baker's yeast).